A 137-amino-acid chain; its full sequence is 3-hydroxyacyl-[acyl-carrier-protein] dehydratase FabZ (137 aa).

His-46 is an active-site residue.

Belongs to the thioester dehydratase family. FabZ subfamily.

The protein localises to the cytoplasm. The enzyme catalyses a (3R)-hydroxyacyl-[ACP] = a (2E)-enoyl-[ACP] + H2O. In terms of biological role, involved in unsaturated fatty acids biosynthesis. Catalyzes the dehydration of short chain beta-hydroxyacyl-ACPs and long chain saturated and unsaturated beta-hydroxyacyl-ACPs. The polypeptide is 3-hydroxyacyl-[acyl-carrier-protein] dehydratase FabZ (Thermotoga neapolitana (strain ATCC 49049 / DSM 4359 / NBRC 107923 / NS-E)).